We begin with the raw amino-acid sequence, 470 residues long: mRNA export factor ICP27 homolog (470 aa).

Disordered stretches follow at residues 1–31 and 73–202; these read MALSSVSSCEPMEDEMSIMGSDTEDNFTGGD and FSAS…AGDR. Positions 73-85 are enriched in polar residues; the sequence is FSASPQRAQPSNP. Composition is skewed to basic residues over residues 94 to 107 and 178 to 187; these read HGRRNRRRPFRRNN and RVHRNRRRGN. 4 residues coordinate Zn(2+): cysteine 359, histidine 437, cysteine 441, and cysteine 446. The CHC2-type zinc-finger motif lies at 359–446; the sequence is CYLSSSGSPT…HKRRCKADTC (88 aa).

Belongs to the HHV-1 ICP27 protein family. In terms of assembly, homodimer. Homodimerization is required for transactivation. Associates in a complex with RNA, and host export factors NXF1/TAP and ALYREF; these interactions allow nuclear export of viral transcripts. Interacts with three host shuttling SR proteins SRSF1, SRSF3 and SRSF7. Interacts with host SRPK1. Interacts with IE62; this interaction enhances IE62 transactivation.

It localises to the host cytoplasm. It is found in the host nucleus. In terms of biological role, multifunctional regulator of the expression of viral genes that mediates nuclear export of viral intronless mRNAs. This immediate early (EI) protein promotes the nuclear export of viral intronless mRNAs by interacting with mRNAs and host NXF1/TAP. This Equine herpesvirus 1 (strain Kentucky A) (EHV-1) protein is mRNA export factor ICP27 homolog.